The primary structure comprises 113 residues: MNTVRVTFLLVFVLAVSLGQTDKDENRMEMQEKTEQGKSYLDFAENLLLQKLEELEAKLLEEDSEESRNSRQKRCIGEGVPCDENDPRCCSGLVCLKPTLHGIWYKSYYCYKK.

The N-terminal stretch at 1 to 21 is a signal peptide; the sequence is MNTVRVTFLLVFVLAVSLGQT. A propeptide spanning residues 22–74 is cleaved from the precursor; the sequence is DKDENRMEMQEKTEQGKSYLDFAENLLLQKLEELEAKLLEEDSEESRNSRQKR. 3 cysteine pairs are disulfide-bonded: C75–C90, C82–C95, and C89–C110.

Belongs to the neurotoxin 14 (magi-1) family. 01 (HNTX-16) subfamily. In terms of tissue distribution, expressed by the venom gland.

Its subcellular location is the secreted. Probable ion channel inhibitor. The protein is U11-theraphotoxin-Hhn1a of Cyriopagopus hainanus (Chinese bird spider).